The sequence spans 436 residues: Histidine--tRNA ligase (436 aa).

This sequence belongs to the class-II aminoacyl-tRNA synthetase family. As to quaternary structure, homodimer.

The protein localises to the cytoplasm. It catalyses the reaction tRNA(His) + L-histidine + ATP = L-histidyl-tRNA(His) + AMP + diphosphate + H(+). The polypeptide is Histidine--tRNA ligase (Prochlorococcus marinus (strain MIT 9303)).